Here is a 529-residue protein sequence, read N- to C-terminus: Probable threonine/serine exporter (529 aa).

10 helical membrane-spanning segments follow: residues 88 to 108 (ITVT…PVTI), 168 to 188 (FALG…LAAV), 212 to 232 (VFGA…AGQD), 234 to 254 (TALV…VGSM), 265 to 285 (ALAR…GILI), 312 to 332 (MPLP…CLTI), 344 to 364 (AGLS…AGFG), 365 to 385 (RVVA…LISI), 389 to 409 (APAL…LAVF), and 428 to 448 (LLEA…GEFL). The tract at residues 482-501 (QPAKSQQPTGTGGQRWRSVA) is disordered.

Belongs to the ThrE exporter (TC 2.A.79) family.

Its subcellular location is the cell membrane. The catalysed reaction is L-threonine(in) + H(+)(out) = L-threonine(out) + H(+)(in). Its function is as follows. Catalyzes the export of L-threonine and L-serine from the cell to the extracellular environment. Export is dependent on the proton motive force. Required for in vitro growth and survival of bacteria inside macrophages. Increased expression is associated with low-level amikacin (AMK) resistance. The protein is Probable threonine/serine exporter of Mycobacterium tuberculosis (strain ATCC 25618 / H37Rv).